The chain runs to 253 residues: Tropomyosin-1 (253 aa).

Positions 7 to 253 form a coiled coil; it reads VNKLVRLQGK…MDDVGDDDTQ (247 aa).

The protein belongs to the tropomyosin family. As to quaternary structure, homodimer.

Tropomyosin, in association with the troponin complex, plays a central role in the calcium dependent regulation of muscle contraction. The polypeptide is Tropomyosin-1 (TROP1) (Hydra vulgaris (Hydra)).